The primary structure comprises 676 residues: Ion-translocating oxidoreductase complex subunit C (676 aa).

4Fe-4S ferredoxin-type domains lie at 369 to 397 and 407 to 436; these read GEPQ…QQLY and KATT…VQYF. Residues C377, C380, C383, C387, C416, C419, C422, and C426 each contribute to the [4Fe-4S] cluster site. Positions 600–652 are disordered; it reads ARKLEQQQANAEPEQQVDPRKAAVEAAIARAKARKLEQQQANAEPEEQVDPRK. Residues 605–615 are compositionally biased toward low complexity; sequence QQQANAEPEQQ.

This sequence belongs to the 4Fe4S bacterial-type ferredoxin family. RnfC subfamily. The complex is composed of six subunits: RsxA, RsxB, RsxC, RsxD, RsxE and RsxG. Requires [4Fe-4S] cluster as cofactor.

The protein localises to the cell inner membrane. Part of a membrane-bound complex that couples electron transfer with translocation of ions across the membrane. Required to maintain the reduced state of SoxR. The sequence is that of Ion-translocating oxidoreductase complex subunit C from Escherichia coli (strain SMS-3-5 / SECEC).